The sequence spans 1404 residues: MKALLDLFKQVTQKEEFDSIKIGLASPEKIRSWSYGEVKKPETINYRTFKPERDGLFCAKIFGPVKDYECLCGKYKRLKHRGVICEKCGVEVTLSRIRRERMGHIELASPVAHIWFLKSLPSRLGLVLDMTLRDIERVLYFEAYVVTDPGMTPLNRGQLLTEDDYLNKTEEFGDDFSAVMGAEGIRTLLSNMDIPLEIESLRLEIQTTGSETKIKKAAKRLKVLEAFNKSGMKPEWMILTVLPVLPPELRPLVPLDGGRFATSDLNDLYRRVINRNNRLKRLLELRAPEIIIRNEKRMLQESVDSLLDNGRRGKAMTGANKRPLKSLADMIKGKGGRFRQNLLGKRVDYSGRSVIVVGPQLKLHQCGLPKKMALELFKPFIFNKLETMGVASTIKAAKREVENESPIVWDILEEVIREHPVMLNRAPTLHRLGIQAFEPILVEGKAIQLHPLVCAAFNADFDGDQMAVHVPLSLEAQMECRTLMLSTNNVLSPANGDPIIVPSQDIVLGLYYMTRKKIGAQGEGMVFSDISEVVRAYENKVVELNAGIIVRIKERKKSRSHGEEPVEAITRYETTVGRALISEILPAGLPFSIINKVLKKKEISKLINASFRLCGLRETVIFADKLMYSGFSYATRGGISICLDDLVTPSQKNDIIHAAEQEVHEIANQYISGLVTQGERYNKVVDIWGRAGDQVAKAMMDQLSVEPVTDRETGQVRADKNGQVVTQESFNSIYMMADSGARGSAAQIRQLSGMRGLMAKPDGSIIETPITANFREGLNILQYFISTHGARKGLADTALKTANSGYLTRRLVDVTQDLVITEDDCDTDGGVIMKALVEGGDVIESLRERILGRVAATDIVNPETGAVIYAAGMLLDEDAVDEIETCGIDEVKVRTPLTCETRYGLCAKCYGRDLGRGMLVNVGEAVGVIAAQSIGEPGTQLTMRTFHIGGAASRTVVANQVESKSNGVIRYSHHIRYVKNAQNELIVISRSGEVYIQDENGRERERHKIPYGATLLVQDGEVIKAGQILASWEPHKRPIIAEYAGKVRFENVEEGVTVVRQIDEITGLATLVVIDPKRRNVAQSKGLRPLVKFLDENDNEINIPGSDQPVSITFHVGSIITVRDGQQVNIGEVLARIPQETSKTRDITGGLPRVAELFEARVPKDVGFLAEATGTVAFGKDTKGKQRLVITDLDGVAHEYLIPKDKHVTAHDGQVVNKGEVIVDGPIDPHDILRLQGVEALARYISNEVQDVYRLQGVRINDKHIEVIVRQMLRRVQIMNAGDSSFIPGEQVERAEVLTENEKLIAENKMPATYEYVLLGITKASLSTDSFISAASFQETTRVLTEASIMGKKDDLRGLKENVIVGRLIPAGTGLSFHNIRKKQRLSESAAYLDTDLTENEVTE.

Zn(2+) contacts are provided by Cys70, Cys72, Cys85, and Cys88. Mg(2+)-binding residues include Asp460, Asp462, and Asp464. Zn(2+) is bound by residues Cys825, Cys899, Cys906, and Cys909.

This sequence belongs to the RNA polymerase beta' chain family. As to quaternary structure, the RNAP catalytic core consists of 2 alpha, 1 beta, 1 beta' and 1 omega subunit. When a sigma factor is associated with the core the holoenzyme is formed, which can initiate transcription. Mg(2+) is required as a cofactor. It depends on Zn(2+) as a cofactor.

The enzyme catalyses RNA(n) + a ribonucleoside 5'-triphosphate = RNA(n+1) + diphosphate. Its function is as follows. DNA-dependent RNA polymerase catalyzes the transcription of DNA into RNA using the four ribonucleoside triphosphates as substrates. The polypeptide is DNA-directed RNA polymerase subunit beta' (Nitrosomonas europaea (strain ATCC 19718 / CIP 103999 / KCTC 2705 / NBRC 14298)).